Here is a 546-residue protein sequence, read N- to C-terminus: Glutathione reductase (546 aa).

Residues 2 to 46 (YKHRYFHFFFFFFFFLVSTKIIRSFTFLNNNTNLSNPVYFKKKAN) constitute an apicoplast transit peptide. FAD contacts are provided by serine 58 and glycine 59. Position 58 (serine 58) interacts with glutathione. A glutathione-binding site is contributed by arginine 65. FAD contacts are provided by glutamate 78, threonine 85, cysteine 86, and lysine 94. A disulfide bridge connects residues cysteine 86 and cysteine 91. Tyrosine 141 is a glutathione binding site. Position 157 (alanine 157) interacts with FAD. NADP(+)-binding residues include isoleucine 233, glutamate 236, arginine 253, arginine 259, and glycine 318. Positions 358 and 400 each coordinate FAD. Arginine 408 serves as a coordination point for glutathione. Position 430 (valine 430) interacts with NADP(+). FAD is bound at residue histidine 531. Catalysis depends on histidine 531, which acts as the Proton acceptor.

The protein belongs to the class-I pyridine nucleotide-disulfide oxidoreductase family. Homodimer. FAD serves as cofactor.

Its subcellular location is the cytoplasm. The protein localises to the plastid. The protein resides in the apicoplast. The enzyme catalyses 2 glutathione + NADP(+) = glutathione disulfide + NADPH + H(+). Its function is as follows. Catalyzes the reduction of glutathione disulfide (GSSG) to reduced glutathione (GSH). Constitutes the major mechanism to maintain a high GSH:GSSG ratio in the cytosol. The polypeptide is Glutathione reductase (Plasmodium falciparum (isolate 3D7)).